The following is a 154-amino-acid chain: Prefoldin subunit 5 (154 aa).

At alanine 2 the chain carries N-acetylalanine. Lysine 42 carries the post-translational modification N6-acetyllysine. Position 56 is a phosphoserine (serine 56).

Belongs to the prefoldin subunit alpha family. Heterohexamer of two PFD-alpha type and four PFD-beta type subunits. Binds to MYC; interacts with its N-terminal domain. As to expression, highly expressed in pancreas and skeletal muscle and moderately in other tissues.

It is found in the nucleus. The protein localises to the cytoplasm. In terms of biological role, binds specifically to cytosolic chaperonin (c-CPN) and transfers target proteins to it. Binds to nascent polypeptide chain and promotes folding in an environment in which there are many competing pathways for nonnative proteins. Represses the transcriptional activity of MYC. The chain is Prefoldin subunit 5 (PFDN5) from Homo sapiens (Human).